Consider the following 310-residue polypeptide: Ferredoxin--NADP reductase (310 aa).

FAD-binding residues include Asp26, Gln34, Tyr39, Val78, Phe108, Asp268, and Thr308.

Belongs to the ferredoxin--NADP reductase type 2 family. As to quaternary structure, homodimer. FAD is required as a cofactor.

The catalysed reaction is 2 reduced [2Fe-2S]-[ferredoxin] + NADP(+) + H(+) = 2 oxidized [2Fe-2S]-[ferredoxin] + NADPH. This Lactobacillus helveticus (strain DPC 4571) protein is Ferredoxin--NADP reductase.